Here is a 732-residue protein sequence, read N- to C-terminus: Prolyl 3-hydroxylase 3 (732 aa).

An N-terminal signal peptide occupies residues 1–19 (MLRLLRLLLLLLLPPPGSP). Positions 15 to 25 (PPGSPEPPEPP) are enriched in pro residues. The tract at residues 15–35 (PPGSPEPPEPPGLAQLSPGSP) is disordered. 4 TPR repeats span residues 39 to 72 (PDLL…RAAL), 152 to 185 (REPY…NPTH), 214 to 247 (YWAA…SLAH), and 312 to 345 (LSQL…YPED). N-linked (GlcNAc...) asparagine glycosylation is found at asparagine 327 and asparagine 458. The 115-residue stretch at 557 to 671 (THLVCRSAIE…RCALALWHTW (115 aa)) folds into the Fe2OG dioxygenase domain. Residues histidine 580, aspartate 582, and histidine 652 each coordinate Fe cation. Residue arginine 662 is part of the active site. Residues 674–703 (EHSEQEWTEAKELLQEEEEEEEEEDILSRD) adopt a coiled-coil conformation. Over residues 676–687 (SEQEWTEAKELL) the composition is skewed to basic and acidic residues. Residues 676–732 (SEQEWTEAKELLQEEEEEEEEEDILSRDPSPEPPSHKLQRVQEKAGKPRRVRVREEL) are disordered. A compositionally biased stretch (acidic residues) spans 688–698 (QEEEEEEEEED). Residues 722–732 (KPRRVRVREEL) show a composition bias toward basic residues. The short motif at 729 to 732 (REEL) is the Prevents secretion from ER element.

Belongs to the leprecan family. Identified in a complex with PLOD1 and P3H4. Requires Fe cation as cofactor. L-ascorbate serves as cofactor. Detected in kidney (at protein level).

The protein localises to the endoplasmic reticulum. The catalysed reaction is L-prolyl-[collagen] + 2-oxoglutarate + O2 = trans-3-hydroxy-L-prolyl-[collagen] + succinate + CO2. Part of a complex composed of PLOD1, P3H3 and P3H4 that catalyzes hydroxylation of lysine residues in collagen alpha chains and is required for normal assembly and cross-linkling of collagen fibrils. Required for normal hydroxylation of lysine residues in type I collagen chains in skin, bone, tendon, aorta and cornea. Required for normal skin stability via its role in hydroxylation of lysine residues in collagen alpha chains and in collagen fibril assembly. Apparently not required for normal prolyl 3-hydroxylation on collagen chains, possibly because it functions redundantly with other prolyl 3-hydroxylases. In Mus musculus (Mouse), this protein is Prolyl 3-hydroxylase 3.